The chain runs to 432 residues: Glutamate-1-semialdehyde 2,1-aminomutase 1 (432 aa).

Position 268 is an N6-(pyridoxal phosphate)lysine (lysine 268).

It belongs to the class-III pyridoxal-phosphate-dependent aminotransferase family. HemL subfamily. In terms of assembly, homodimer. Pyridoxal 5'-phosphate serves as cofactor.

It is found in the cytoplasm. It carries out the reaction (S)-4-amino-5-oxopentanoate = 5-aminolevulinate. It participates in porphyrin-containing compound metabolism; protoporphyrin-IX biosynthesis; 5-aminolevulinate from L-glutamyl-tRNA(Glu): step 2/2. The chain is Glutamate-1-semialdehyde 2,1-aminomutase 1 from Bacillus cereus (strain B4264).